Here is a 98-residue protein sequence, read N- to C-terminus: uncharacterized protein (98 aa).

A signal peptide spans 1–19 (MTERRRALSLAAVVDSINL). The interval 40-98 (PPGGSFSGIKRESRRKRPSRNEIYGGGVLEQEVRMRRWSKTASPPVSLHHRPLGPARKP) is disordered. The span at 87–98 (LHHRPLGPARKP) shows a compositional bias: basic residues.

This is an uncharacterized protein from Homo sapiens (Human).